The primary structure comprises 415 residues: Mechanosensing system component YbdG (415 aa).

Topologically, residues 1–24 are periplasmic; it reads MQDLISQVEDLAGIEIDHTTSMVM. A helical membrane pass occupies residues 25–45; sequence IFGIIFLTAVVVHIILHWVVL. Residues 46-67 are Cytoplasmic-facing; that stretch reads RTFEKRAIASSRLWLQIITQNK. The chain crosses the membrane as a helical span at residues 68–88; the sequence is LFHRLAFTLQGIIVNIQAVFW. At 89-104 the chain is on the periplasmic side; the sequence is LQKGTEAADILTTCAQ. A helical membrane pass occupies residues 105–125; it reads LWIMMYALLSVFSLLDVILNL. Residues 126–148 are Cytoplasmic-facing; sequence AQKFPAASQLPLKGIFQGIKLIG. A helical transmembrane segment spans residues 149-169; that stretch reads AILVGILMISLLIGQSPAILI. Over 170-173 the chain is Periplasmic; the sequence is SGLG. The chain crosses the membrane as a helical span at residues 174 to 194; sequence AMAAVLMLVFKDPILGLVAGI. Residues 195–415 lie on the Cytoplasmic side of the membrane; it reads QLSANDMLKL…IRSLAGAFKQ (221 aa).

The protein belongs to the MscS (TC 1.A.23) family. As to quaternary structure, homoheptamer.

It localises to the cell inner membrane. Functions as a component of a mechanosensing system that transmits signals triggered by external osmotic changes to intracellular factors. This chain is Mechanosensing system component YbdG (ybdG), found in Shigella flexneri.